A 77-amino-acid chain; its full sequence is Small ribosomal subunit protein bS18 (77 aa).

It belongs to the bacterial ribosomal protein bS18 family. In terms of assembly, part of the 30S ribosomal subunit. Forms a tight heterodimer with protein bS6.

Its function is as follows. Binds as a heterodimer with protein bS6 to the central domain of the 16S rRNA, where it helps stabilize the platform of the 30S subunit. The sequence is that of Small ribosomal subunit protein bS18 from Bacillus cytotoxicus (strain DSM 22905 / CIP 110041 / 391-98 / NVH 391-98).